The primary structure comprises 574 residues: MANPPHGGVLKDLLARDAPRHDELEMEAEKLPAIVLTERQLCDLELIMNGGFSPLEGFMNQKDYDSVCENVRLADGNLFSMPITLDVSQAVIDEGKLKPGSRVTLRDFRDDRNLAILTIDDIYRPDKAKEAKLVFGGDEEHPAIKYLYNKVQEFYVGGKIEAINKLNHYDYVALRYTPAELRVHFDKLGWNRVVAFQTRNPMHRAHRELTVRAARARQANVLIHPVVGLTKPGDIDHFTRVRAYQALLPRYPNGMAVLGLLGLAMRMGGPREAIWHAIIRKNHGATHFIVGRDHAGPGKNSKGQEFYGPYDAQHAVEKYREELGIEVVEFQQVTYLPDTDEYKPKDEVPPGVKTLDISGTELRNRLRTGAPIPEWFSYPEVVKILRESSPPRHTQGFTIFLTGYMNSGKDAIARALQVTLNQQGGRSVSLLLGDTVRHELSSELGFSREDRHTNIQRIAFVAGELTRAGAAVIASPIAPYEESRNAARDAVTQAGGNFFLVHVATPLEYCEKTDKRGIYAKARRGEIKGFTGVDDPYETPSKADLTVDVSKQTVRSIVHEIILMLETEGFFDRS.

Residues 1–169 (MANPPHGGVL…IEAINKLNHY (169 aa)) form an N-terminal region. The tract at residues 170–394 (DYVALRYTPA…LRESSPPRHT (225 aa)) is catalytic. Sulfate is bound at residue glutamine 197. Residues 197-200 (QTRN) and 291-294 (GRDH) contribute to the ATP site. Residues threonine 198, arginine 199, and asparagine 200 contribute to the active site. Arginine 199 serves as a coordination point for sulfate. Alanine 295 contributes to the sulfate binding site. Residue valine 333 coordinates ATP. Residues 395-574 (QGFTIFLTGY…LETEGFFDRS (180 aa)) are allosteric regulation domain; adenylyl-sulfate kinase-like. 3'-phosphoadenylyl sulfate-binding positions include 434–437 (DTVR), arginine 451, 477–478 (IA), and arginine 516.

This sequence in the N-terminal section; belongs to the sulfate adenylyltransferase family. It in the C-terminal section; belongs to the APS kinase family. Homohexamer. Dimer of trimers.

The protein localises to the cytoplasm. It carries out the reaction sulfate + ATP + H(+) = adenosine 5'-phosphosulfate + diphosphate. It participates in sulfur metabolism; hydrogen sulfide biosynthesis; sulfite from sulfate: step 1/3. With respect to regulation, allosterically inhibited by 3'-phosphoadenosine 5'-phosphosulfate (PAPS). Its function is as follows. Catalyzes the first intracellular reaction of sulfate assimilation, forming adenosine-5'-phosphosulfate (APS) from inorganic sulfate and ATP. Plays an important role in sulfate activation as a component of the biosynthesis pathway of sulfur-containing amino acids. The sequence is that of Sulfate adenylyltransferase from Aspergillus fumigatus (strain ATCC MYA-4609 / CBS 101355 / FGSC A1100 / Af293) (Neosartorya fumigata).